The primary structure comprises 136 residues: Large ribosomal subunit protein uL16c (136 aa).

Belongs to the universal ribosomal protein uL16 family. Part of the 50S ribosomal subunit.

It localises to the plastid. The protein resides in the chloroplast. The chain is Large ribosomal subunit protein uL16c from Saccharum hybrid (Sugarcane).